The chain runs to 377 residues: Virion membrane protein OPG143 (377 aa).

A lipid anchor (N-myristoyl glycine; by host) is attached at glycine 2. At 2–342 the chain is on the virion surface side; the sequence is GAAVTLNRIK…VKDKIKLPTW (341 aa). The chain crosses the membrane as a helical; Signal-anchor for type II membrane protein span at residues 343-363; it reads LGAAITLVVISVIFYFISIYS. Residues 364 to 377 are Intravirion-facing; the sequence is RPKIKTNDINVRRR.

The protein belongs to the orthopoxvirus OPG143 family. As to quaternary structure, part of a stable entry-fusion complex (EFC) which is at least composed of proteins OPG143, OPG147, OPG155, OPG086, OPG094, OPG107, OPG104, and OPG099. Formation of the viral membrane is necessary for the assembly of the complex. Interacts with OPG094. Interacts with OPG153. Most cysteines are linked by disulfide bonds. They are created by the viral disulfide bond formation pathway, a poxvirus-specific redox pathway that operates on the cytoplasmic side of the MV membranes.

It localises to the virion membrane. Envelope protein part of the entry-fusion complex responsible for the virus membrane fusion with host cell membrane during virus entry. Also plays a role in cell-cell fusion (syncytium formation). The sequence is that of Virion membrane protein OPG143 (OPG143) from Vaccinia virus (strain Western Reserve) (VACV).